The sequence spans 122 residues: Large ribosomal subunit protein uL14 (122 aa).

It belongs to the universal ribosomal protein uL14 family. In terms of assembly, part of the 50S ribosomal subunit. Forms a cluster with proteins L3 and L19. In the 70S ribosome, L14 and L19 interact and together make contacts with the 16S rRNA in bridges B5 and B8.

In terms of biological role, binds to 23S rRNA. Forms part of two intersubunit bridges in the 70S ribosome. This chain is Large ribosomal subunit protein uL14, found in Rhodopseudomonas palustris (strain HaA2).